The sequence spans 161 residues: Ribosomal RNA large subunit methyltransferase H (161 aa).

Residues L78, G110, and 129–134 (LSRLTF) each bind S-adenosyl-L-methionine.

It belongs to the RNA methyltransferase RlmH family. Homodimer.

It is found in the cytoplasm. The catalysed reaction is pseudouridine(1915) in 23S rRNA + S-adenosyl-L-methionine = N(3)-methylpseudouridine(1915) in 23S rRNA + S-adenosyl-L-homocysteine + H(+). Functionally, specifically methylates the pseudouridine at position 1915 (m3Psi1915) in 23S rRNA. This is Ribosomal RNA large subunit methyltransferase H from Heliobacterium modesticaldum (strain ATCC 51547 / Ice1).